We begin with the raw amino-acid sequence, 261 residues long: uncharacterized protein (261 aa).

NADP(+) contacts are provided by I33, K60, D78, and N105. Catalysis depends on S157, which acts as the Proton donor. Y172, K176, and T206 together coordinate NADP(+). Y172 (proton acceptor) is an active-site residue. K176 functions as the Lowers pKa of active site Tyr in the catalytic mechanism.

The protein belongs to the short-chain dehydrogenases/reductases (SDR) family.

The protein localises to the cytoplasm. It is found in the nucleus. This is an uncharacterized protein from Schizosaccharomyces pombe (strain 972 / ATCC 24843) (Fission yeast).